A 185-amino-acid polypeptide reads, in one-letter code: Elongation factor P (185 aa).

Belongs to the elongation factor P family.

The protein localises to the cytoplasm. The protein operates within protein biosynthesis; polypeptide chain elongation. In terms of biological role, involved in peptide bond synthesis. Stimulates efficient translation and peptide-bond synthesis on native or reconstituted 70S ribosomes in vitro. Probably functions indirectly by altering the affinity of the ribosome for aminoacyl-tRNA, thus increasing their reactivity as acceptors for peptidyl transferase. In Bacillus velezensis (strain DSM 23117 / BGSC 10A6 / LMG 26770 / FZB42) (Bacillus amyloliquefaciens subsp. plantarum), this protein is Elongation factor P.